Here is a 23-residue protein sequence, read N- to C-terminus: U1-poneritoxin-Da3b (23 aa).

This sequence belongs to the non-disulfide-bridged peptide (NDBP) superfamily. Medium-length antimicrobial peptide (group 3) family. Ponericin-W subfamily. In terms of tissue distribution, expressed by the venom gland.

It is found in the secreted. Its subcellular location is the target cell membrane. Its function is as follows. May have antimicrobial properties, like most ant linear peptides. May act by disrupting the integrity of the bacterial cell membrane. The polypeptide is U1-poneritoxin-Da3b (Dinoponera australis (Giant neotropical hunting ant)).